The chain runs to 275 residues: Ciliary microtubule inner protein 2B (275 aa).

Disordered stretches follow at residues 62 to 84 (PPIR…RGQE) and 125 to 169 (EKQG…SPYS). Composition is skewed to basic and acidic residues over residues 71–84 (EVPR…RGQE) and 125–147 (EKQG…KDQV).

The protein belongs to the CIMIP2 family. Microtubule inner protein component of sperm flagellar doublet microtubules. In terms of tissue distribution, expressed in airway epithelial cells.

The protein localises to the cytoplasm. Its subcellular location is the cytoskeleton. It is found in the cilium axoneme. It localises to the flagellum axoneme. Microtubule inner protein (MIP) part of the dynein-decorated doublet microtubules (DMTs) in cilia axoneme, which is required for motile cilia beating. The sequence is that of Ciliary microtubule inner protein 2B from Homo sapiens (Human).